A 415-amino-acid chain; its full sequence is L-cysteine:1D-myo-inositol 2-amino-2-deoxy-alpha-D-glucopyranoside ligase (415 aa).

Cysteine 43 serves as a coordination point for Zn(2+). L-cysteinyl-5'-AMP is bound by residues 43–46 (CGIT), threonine 58, and 81–83 (NVT). The 'HIGH' region signature appears at 45–55 (ITPYDATHLGH). The 'ERGGDP' region motif lies at 187–192 (ERGGDP). Tryptophan 227 contributes to the L-cysteinyl-5'-AMP binding site. Cysteine 231 is a binding site for Zn(2+). L-cysteinyl-5'-AMP is bound at residue 249 to 251 (GSD). Histidine 256 provides a ligand contact to Zn(2+). Residue isoleucine 283 participates in L-cysteinyl-5'-AMP binding. Positions 289-293 (KMSKS) match the 'KMSKS' region motif.

This sequence belongs to the class-I aminoacyl-tRNA synthetase family. MshC subfamily. In terms of assembly, monomer. Zn(2+) is required as a cofactor.

The enzyme catalyses 1D-myo-inositol 2-amino-2-deoxy-alpha-D-glucopyranoside + L-cysteine + ATP = 1D-myo-inositol 2-(L-cysteinylamino)-2-deoxy-alpha-D-glucopyranoside + AMP + diphosphate + H(+). In terms of biological role, catalyzes the ATP-dependent condensation of GlcN-Ins and L-cysteine to form L-Cys-GlcN-Ins. The chain is L-cysteine:1D-myo-inositol 2-amino-2-deoxy-alpha-D-glucopyranoside ligase from Saccharomonospora viridis (strain ATCC 15386 / DSM 43017 / JCM 3036 / CCUG 5913 / NBRC 12207 / NCIMB 9602 / P101) (Thermoactinomyces viridis).